The primary structure comprises 261 residues: F-actin-capping protein subunit alpha (261 aa).

The protein belongs to the F-actin-capping protein alpha subunit family. Heterodimer of an alpha and a beta subunit.

In terms of biological role, F-actin-capping proteins bind in a Ca(2+)-independent manner to the fast growing ends of actin filaments (barbed end) thereby blocking the exchange of subunits at these ends. Unlike other capping proteins (such as gelsolin and severin), these proteins do not sever actin filaments. The polypeptide is F-actin-capping protein subunit alpha (CAP1) (Eremothecium gossypii (strain ATCC 10895 / CBS 109.51 / FGSC 9923 / NRRL Y-1056) (Yeast)).